The sequence spans 264 residues: Short-chain dehydrogenase/reductase malC (264 aa).

A helical transmembrane segment spans residues 13-35 (GKNVLIIGGTSGIGFAVAQLVIE). The NADP(+) site is built by T22, S23, I25, S45, N46, K49, D75, N88, R130, V202, and T204. The N-linked (GlcNAc...) asparagine glycan is linked to N249.

The protein belongs to the short-chain dehydrogenases/reductases (SDR) family.

The protein localises to the membrane. It carries out the reaction 1-hydroxy-3-{[2-(1,1-dimethylallyl)-indol-3-yl]methyl}-6H,7H,8H-5lambda(5)-pyrrolo[1,2-a]pyrazine + NADPH + H(+) = 1-hydroxy-3-{[2-(1,1-dimethylallyl)-indol-3-yl]methyl}-4H,6H,7H,8H-pyrrolo[1,2-a]pyrazine + NADP(+). It catalyses the reaction 1-hydroxy-3-{[2-(1,1-dimethylallyl)-indol-3-yl]methyl}-4H,6H,7H,8H-pyrrolo[1,2-a]pyrazine = (+)-premalbrancheamide. Its pathway is alkaloid biosynthesis. Functionally, short-chain dehydrogenase/reductase; part of the gene cluster that mediates the biosynthesis of malbrancheamide, a dichlorinated fungal indole alkaloid that belongs to a family of natural products containing a characteristic bicyclo[2.2.2]diazaoctane core. The first step of malbrancheamide biosynthesis involves coupling of L-proline and L-tryptophan by malG, a bimodular NRPS, to produce L-Pro-L-Trp aldehyde through reductive offloading. This compound undergoes spontaneous cyclization and dehydration to give a dienamine which is reverse prenylated at C-2 by malE. The other prenyltransferase present in the cluster, malB, displays modest activity, suggesting that may be a redundant gene in the pathway. Subsequently, a [4+2] Diels-Alder cyclo-addition catalyzed by the bifunctional enzyme malC forms the characteristic bicyclo[2.2.2]diazaoctane ring of premalbrancheamid. The first reaction catalyzed is a NADPH-dependent reduction reaction in which the nicotinamide cofactor is a stoichiometric reagent. Either NADH or NADPH is effective as a cofactor. NADP(+) is required for stereocontrolled formation of premalbrancheamide, however it does not appear to be required as a formal stoichiometric reagent because the second reaction performed by malC, the [4+2] cycloaddition, is a balanced chemical reaction without requirement for hydride transfer to balance the reaction. Finally, the flavin-dependent halogenase malA catalyzes the iterative dichlorination of the indole ring of premalbrancheamide to yield C-9 monochlorinated malbrancheamide B, C-8 monochlorinated isomalbrancheamide B, and dichlorinated malbrancheamide. MalA is also able to brominate premalbrancheamide at C-9 to yield malbrancheamide C, and, to a lesser extend, at C-8 to yield isomalbrancheamide C. Finally, malA can brominate C-9 monochlorinated malbrancheamide B at C-8 to yield malbrancheamide D, or C-8 monochlorinated isomalbrancheamide B at C-9 to produce isomalbrancheamide D. The chain is Short-chain dehydrogenase/reductase malC from Malbranchea aurantiaca.